The primary structure comprises 622 residues: Interleukin-1 receptor-associated kinase-like 2 (622 aa).

Residues 13 to 94 (LDDLCRNIDT…RAAQIVLSWK (82 aa)) form the Death domain. In terms of domain architecture, Protein kinase spans 208–473 (FDQSHRISEG…LPEACEEAWA (266 aa)). ATP contacts are provided by residues 214–222 (ISEGTFADI), K235, and 335–338 (KSAN). Disordered regions lie at residues 511–532 (RVSEATGSSSNTPEETDDVDNS) and 553–591 (LFTGHGAAQPSTSGRQEADSSSEACTGPQTPQNATETSW). 2 stretches are compositionally biased toward polar residues: residues 513–523 (SEATGSSSNTP) and 561–590 (QPSTSGRQEADSSSEACTGPQTPQNATETS).

It belongs to the protein kinase superfamily. TKL Ser/Thr protein kinase family. Pelle subfamily. As to quaternary structure, interacts with MYD88. IL-1 stimulation leads to the formation of a signaling complex which dissociates from the IL-1 receptor following the binding of PELI1. Ubiquitously expressed, with a higher expression observed in brain, spleen and liver. Isoform 1 and isoform 2 are considered agonist and isoform 3 and isoform 4 are considered antagonist.

Binds to the IL-1 type I receptor following IL-1 engagement, triggering intracellular signaling cascades leading to transcriptional up-regulation and mRNA stabilization. The protein is Interleukin-1 receptor-associated kinase-like 2 (Irak2) of Mus musculus (Mouse).